We begin with the raw amino-acid sequence, 355 residues long: Uroporphyrinogen decarboxylase (355 aa).

Substrate contacts are provided by residues 36–40, aspartate 85, tyrosine 160, serine 215, and histidine 334; that span reads RQAGR.

The protein belongs to the uroporphyrinogen decarboxylase family. As to quaternary structure, homodimer.

It localises to the cytoplasm. The catalysed reaction is uroporphyrinogen III + 4 H(+) = coproporphyrinogen III + 4 CO2. Its pathway is porphyrin-containing compound metabolism; protoporphyrin-IX biosynthesis; coproporphyrinogen-III from 5-aminolevulinate: step 4/4. Its function is as follows. Catalyzes the decarboxylation of four acetate groups of uroporphyrinogen-III to yield coproporphyrinogen-III. The chain is Uroporphyrinogen decarboxylase from Rhodococcus opacus (strain B4).